A 486-amino-acid chain; its full sequence is Cardiolipin synthase A (486 aa).

2 helical membrane-spanning segments follow: residues Thr-3–Val-23 and Met-38–Phe-58. PLD phosphodiesterase domains lie at Met-219–Arg-246 and Glu-399–Ser-426. Catalysis depends on residues His-224, Lys-226, Asp-231, His-404, Lys-406, and Asp-411.

It belongs to the phospholipase D family. Cardiolipin synthase subfamily. ClsA sub-subfamily.

It is found in the cell inner membrane. It catalyses the reaction 2 a 1,2-diacyl-sn-glycero-3-phospho-(1'-sn-glycerol) = a cardiolipin + glycerol. Functionally, catalyzes the reversible phosphatidyl group transfer from one phosphatidylglycerol molecule to another to form cardiolipin (CL) (diphosphatidylglycerol) and glycerol. In Serratia proteamaculans (strain 568), this protein is Cardiolipin synthase A.